Reading from the N-terminus, the 294-residue chain is Elongation factor Ts (294 aa).

Residues 82–85 (TDFV) are involved in Mg(2+) ion dislocation from EF-Tu.

This sequence belongs to the EF-Ts family.

The protein resides in the cytoplasm. Its function is as follows. Associates with the EF-Tu.GDP complex and induces the exchange of GDP to GTP. It remains bound to the aminoacyl-tRNA.EF-Tu.GTP complex up to the GTP hydrolysis stage on the ribosome. This chain is Elongation factor Ts, found in Psychrobacter arcticus (strain DSM 17307 / VKM B-2377 / 273-4).